The primary structure comprises 622 residues: Low affinity potassium transport system protein Kup (622 aa).

The next 12 helical transmembrane spans lie at L9–L29, V49–L69, V103–I123, P137–I157, V165–L185, V213–A233, W247–L267, P276–A296, I337–F357, L363–T383, F396–L416, and L419–T439.

This sequence belongs to the HAK/KUP transporter (TC 2.A.72) family.

It localises to the cell inner membrane. The catalysed reaction is K(+)(in) + H(+)(in) = K(+)(out) + H(+)(out). Functionally, responsible for the low-affinity transport of potassium into the cell. Likely operates as a K(+):H(+) symporter. In Shigella flexneri serotype 5b (strain 8401), this protein is Low affinity potassium transport system protein Kup.